The following is a 375-amino-acid chain: Peritrophin-48 (375 aa).

A signal peptide spans 1–20 (MIIKTLLASVAIMLIATVNA). Chitin-binding type-2 domains are found at residues 25–83 (AKYC…NCIL), 86–143 (DNPC…SDDD), 153–210 (LNIC…MCER), 224–292 (ETLC…GCNR), and 294–360 (EYTT…ACQN). Cysteines 60 and 73 form a disulfide. N117 is a glycosylation site (N-linked (GlcNAc...) asparagine). Cystine bridges form between C120/C133, C187/C200, C265/C278, and C330/C343. N-linked (GlcNAc...) asparagine glycosylation is present at N360.

Glycosylated. As to expression, cardia and midgut peritrophic membrane.

Functionally, may bind chitin or related oligosaccharide structures. In Lucilia cuprina (Green bottle fly), this protein is Peritrophin-48.